Here is a 243-residue protein sequence, read N- to C-terminus: Uridylate kinase (243 aa).

Residue 15-18 coordinates ATP; that stretch reads KLSG. Gly56 contributes to the UMP binding site. The ATP site is built by Gly57 and Arg61. UMP is bound at residue 138-145; the sequence is TGNPYFST. The ATP site is built by Asn166, Tyr172, and Asp175.

The protein belongs to the UMP kinase family. Homohexamer.

Its subcellular location is the cytoplasm. It carries out the reaction UMP + ATP = UDP + ADP. It participates in pyrimidine metabolism; CTP biosynthesis via de novo pathway; UDP from UMP (UMPK route): step 1/1. With respect to regulation, inhibited by UTP. Functionally, catalyzes the reversible phosphorylation of UMP to UDP. This chain is Uridylate kinase, found in Mycoplasma genitalium (strain ATCC 33530 / DSM 19775 / NCTC 10195 / G37) (Mycoplasmoides genitalium).